The following is a 254-amino-acid chain: Triosephosphate isomerase (254 aa).

Substrate is bound at residue Asn9–Lys11. His95 (electrophile) is an active-site residue. The active-site Proton acceptor is the Glu167. Substrate is bound by residues Gly173, Ser213, and Gly234–Gly235.

It belongs to the triosephosphate isomerase family. Homodimer.

It localises to the cytoplasm. The catalysed reaction is D-glyceraldehyde 3-phosphate = dihydroxyacetone phosphate. The protein operates within carbohydrate biosynthesis; gluconeogenesis. It participates in carbohydrate degradation; glycolysis; D-glyceraldehyde 3-phosphate from glycerone phosphate: step 1/1. In terms of biological role, involved in the gluconeogenesis. Catalyzes stereospecifically the conversion of dihydroxyacetone phosphate (DHAP) to D-glyceraldehyde-3-phosphate (G3P). This is Triosephosphate isomerase from Roseiflexus castenholzii (strain DSM 13941 / HLO8).